The primary structure comprises 63 residues: ATP synthase subunit epsilon, mitochondrial (63 aa).

F-type ATP synthases have 2 components, the catalytic core F(1) and the membrane-embedded component F(0), linked together by a central stalk and a peripheral stalk. The central stalk, also called rotor shaft, is often seen as part of F(1). The peripheral stalk is seen as part of F(0). F(0) contains the membrane channel next to the rotor. F-type ATP synthases form dimers but each monomer functions independently in ATP generation. The dimer consists of 18 different polypeptides: ATP1 (subunit alpha, part of F(1), 3 molecules per monomer), ATP2 (subunit beta, part of F(1), 3 molecules per monomer), ATP3 (subunit gamma, part of the central stalk), ATP4 (subunit b, part of the peripheral stalk), ATP5/OSCP (subunit 5/OSCP, part of the peripheral stalk), ATP6 (subunit a, part of the peripheral stalk), ATP7 (subunit d, part of the peripheral stalk), ATP8 (subunit 8, part of the peripheral stalk), OLI1 (subunit c, part of the rotor, 10 molecules per monomer), ATP14 (subunit h, part of the peripheral stalk), ATP15 (subunit epsilon, part of the central stalk), ATP16 (subunit delta, part of the central stalk), ATP17 (subunit f, part of the peripheral stalk), ATP18 (subunit i/j, part of the peripheral stalk). Dimer-specific subunits are ATP19 (subunit k, at interface between monomers), ATP20 (subunit g, at interface between monomers), TIM11 (subunit e, at interface between monomers). Also contains subunit L.

The protein resides in the mitochondrion inner membrane. Mitochondrial membrane ATP synthase (F(1)F(0) ATP synthase or Complex V) produces ATP from ADP in the presence of a proton gradient across the membrane which is generated by electron transport complexes of the respiratory chain. F-type ATP synthases consist of two structural domains, F(1) - containing the extramembraneous catalytic core, and F(0) - containing the membrane proton channel, linked together by a central stalk and a peripheral stalk. During catalysis, ATP synthesis in the catalytic domain of F(1) is coupled via a rotary mechanism of the central stalk subunits to proton translocation. Part of the complex F(1) domain and the central stalk which is part of the complex rotary element. Rotation of the central stalk against the surrounding alpha/ATP1(3)beta/ATP2(3) subunits leads to hydrolysis of ATP in three separate catalytic sites on the beta/ATP2 subunits. The protein is ATP synthase subunit epsilon, mitochondrial of Pichia angusta (Yeast).